The primary structure comprises 341 residues: Phenylalanine--tRNA ligase alpha subunit (341 aa).

Residue E256 coordinates Mg(2+).

The protein belongs to the class-II aminoacyl-tRNA synthetase family. Phe-tRNA synthetase alpha subunit type 1 subfamily. As to quaternary structure, tetramer of two alpha and two beta subunits. It depends on Mg(2+) as a cofactor.

The protein localises to the cytoplasm. The enzyme catalyses tRNA(Phe) + L-phenylalanine + ATP = L-phenylalanyl-tRNA(Phe) + AMP + diphosphate + H(+). This is Phenylalanine--tRNA ligase alpha subunit from Leptospira borgpetersenii serovar Hardjo-bovis (strain JB197).